Consider the following 726-residue polypeptide: Putative RNA polymerase II subunit B1 CTD phosphatase RPAP2 homolog (726 aa).

The RTR1-type zinc finger occupies A43–S131. The Zn(2+) site is built by C66, C71, C107, and C111. Basic and acidic residues predominate over residues V209–Q218. Disordered regions lie at residues V209 to S242 and K294 to G323. Polar residues predominate over residues D220 to E241.

The protein belongs to the RPAP2 family.

Its subcellular location is the nucleus. It carries out the reaction O-phospho-L-seryl-[protein] + H2O = L-seryl-[protein] + phosphate. It catalyses the reaction O-phospho-L-threonyl-[protein] + H2O = L-threonyl-[protein] + phosphate. In terms of biological role, putative RNA polymerase II subunit B1 C-terminal domain (CTD) phosphatase involved in RNA polymerase II transcription regulation. The chain is Putative RNA polymerase II subunit B1 CTD phosphatase RPAP2 homolog from Oryza sativa subsp. japonica (Rice).